Consider the following 255-residue polypeptide: Ribosomal RNA small subunit methyltransferase G (255 aa).

Residues G89, F94, 112-114 (DST), 140-141 (VE), and R159 each bind S-adenosyl-L-methionine.

It belongs to the methyltransferase superfamily. RNA methyltransferase RsmG family.

It localises to the cytoplasm. Its function is as follows. Specifically methylates the N7 position of a guanine in 16S rRNA. This is Ribosomal RNA small subunit methyltransferase G from Trichodesmium erythraeum (strain IMS101).